We begin with the raw amino-acid sequence, 722 residues long: Probable C-mannosyltransferase DPY19L4 (722 aa).

The disordered stretch occupies residues 1-34 (MAKEEGTSVEPRQRKKQRTSGSQEAKAEKIRRTP). Alanine 2 carries the post-translational modification N-acetylalanine. The segment covering 25–34 (AKAEKIRRTP) has biased composition (basic and acidic residues). 12 helical membrane-spanning segments follow: residues 51-71 (IVIG…YLSA), 160-177 (VYFY…YVTA), 183-201 (WLMS…WFLI), 246-262 (FCYL…MMVW), 268-284 (VLFL…IFSV), 291-307 (YEVY…GYLL), 313-331 (ALLV…LVKC), 351-369 (FYLL…KMFV), 420-440 (LLPF…QVFF), 465-485 (IIYH…MEGL), 487-507 (FIWT…PELW), and 521-541 (PMLL…LSLW).

The protein belongs to the dpy-19 family.

The protein localises to the membrane. Its function is as follows. Probable C-mannosyltransferase that mediates C-mannosylation of tryptophan residues on target proteins. In Mus musculus (Mouse), this protein is Probable C-mannosyltransferase DPY19L4 (Dpy19l4).